The chain runs to 432 residues: Adenylosuccinate synthetase (432 aa).

GTP contacts are provided by residues 13–19 (GDEGKGK) and 41–43 (GHT). The Proton acceptor role is filled by Asp14. Mg(2+) is bound by residues Asp14 and Gly41. IMP-binding positions include 14 to 17 (DEGK), 39 to 42 (NAGH), Thr130, Arg144, Gln225, Thr240, and Arg304. Catalysis depends on His42, which acts as the Proton donor. 300–306 (AVTGRPR) lines the substrate pocket. GTP contacts are provided by residues Arg306, 332-334 (KLD), and 415-417 (STG).

It belongs to the adenylosuccinate synthetase family. As to quaternary structure, homodimer. Mg(2+) serves as cofactor.

Its subcellular location is the cytoplasm. It catalyses the reaction IMP + L-aspartate + GTP = N(6)-(1,2-dicarboxyethyl)-AMP + GDP + phosphate + 2 H(+). Its pathway is purine metabolism; AMP biosynthesis via de novo pathway; AMP from IMP: step 1/2. Plays an important role in the de novo pathway of purine nucleotide biosynthesis. Catalyzes the first committed step in the biosynthesis of AMP from IMP. This chain is Adenylosuccinate synthetase, found in Haemophilus ducreyi (strain 35000HP / ATCC 700724).